The primary structure comprises 585 residues: Cytochrome c lysine N-methyltransferase 1 (585 aa).

The SET domain maps to 18–273 (KSLSLKPSTI…KPIEVFISYS (256 aa)). Residues 186–288 (LNLSDIKHLY…FSMLVTYGFT (103 aa)) are SET-like.

Belongs to the class V-like SAM-binding methyltransferase superfamily.

Its subcellular location is the cytoplasm. The protein resides in the cytosol. The enzyme catalyses L-lysyl-[cytochrome c] + S-adenosyl-L-methionine = N(6)-methyl-L-lysyl-[cytochrome c] + S-adenosyl-L-homocysteine + H(+). In terms of biological role, methyltransferase which mediates trimethylation of 'Lys-78' of cytochrome c (CYC1). The protein is Cytochrome c lysine N-methyltransferase 1 (CTM1) of Saccharomyces cerevisiae (strain ATCC 204508 / S288c) (Baker's yeast).